The sequence spans 82 residues: Cytochrome b559 subunit alpha (82 aa).

The helical transmembrane segment at 21-35 threads the bilayer; it reads VIHSVTIPSLFIAGW. A heme-binding site is contributed by His-23.

It belongs to the PsbE/PsbF family. Heterodimer of an alpha subunit and a beta subunit. PSII is composed of 1 copy each of membrane proteins PsbA, PsbB, PsbC, PsbD, PsbE, PsbF, PsbH, PsbI, PsbJ, PsbK, PsbL, PsbM, PsbT, PsbX, PsbY, PsbZ, Psb30/Ycf12, at least 3 peripheral proteins of the oxygen-evolving complex and a large number of cofactors. It forms dimeric complexes. Heme b is required as a cofactor.

The protein localises to the plastid. The protein resides in the chloroplast thylakoid membrane. Its function is as follows. This b-type cytochrome is tightly associated with the reaction center of photosystem II (PSII). PSII is a light-driven water:plastoquinone oxidoreductase that uses light energy to abstract electrons from H(2)O, generating O(2) and a proton gradient subsequently used for ATP formation. It consists of a core antenna complex that captures photons, and an electron transfer chain that converts photonic excitation into a charge separation. This Ostreococcus tauri protein is Cytochrome b559 subunit alpha.